Here is a 130-residue protein sequence, read N- to C-terminus: Small ribosomal subunit protein uS8 (130 aa).

The protein belongs to the universal ribosomal protein uS8 family. Part of the 30S ribosomal subunit. Contacts proteins S5 and S12.

Its function is as follows. One of the primary rRNA binding proteins, it binds directly to 16S rRNA central domain where it helps coordinate assembly of the platform of the 30S subunit. The sequence is that of Small ribosomal subunit protein uS8 from Cellvibrio japonicus (strain Ueda107) (Pseudomonas fluorescens subsp. cellulosa).